We begin with the raw amino-acid sequence, 204 residues long: ATP phosphoribosyltransferase (204 aa).

The protein belongs to the ATP phosphoribosyltransferase family. Short subfamily. As to quaternary structure, heteromultimer composed of HisG and HisZ subunits.

The protein resides in the cytoplasm. The catalysed reaction is 1-(5-phospho-beta-D-ribosyl)-ATP + diphosphate = 5-phospho-alpha-D-ribose 1-diphosphate + ATP. It participates in amino-acid biosynthesis; L-histidine biosynthesis; L-histidine from 5-phospho-alpha-D-ribose 1-diphosphate: step 1/9. Catalyzes the condensation of ATP and 5-phosphoribose 1-diphosphate to form N'-(5'-phosphoribosyl)-ATP (PR-ATP). Has a crucial role in the pathway because the rate of histidine biosynthesis seems to be controlled primarily by regulation of HisG enzymatic activity. The polypeptide is ATP phosphoribosyltransferase (Hydrogenobaculum sp. (strain Y04AAS1)).